The sequence spans 79 residues: Dolichyl-diphosphooligosaccharide--protein glycosyltransferase subunit TMEM258 (79 aa).

Transmembrane regions (helical) follow at residues 18 to 38 (LPLLATVLCGVGLLLLAAFTM) and 55 to 75 (FIAATSSIFLGFGSVFLLLWV).

This sequence belongs to the OST5 family. In terms of assembly, component of the oligosaccharyltransferase (OST) complex.

It localises to the membrane. It functions in the pathway protein modification; protein glycosylation. In terms of biological role, subunit of the oligosaccharyl transferase (OST) complex that catalyzes the initial transfer of a defined glycan (Glc(3)Man(9)GlcNAc(2) in eukaryotes) from the lipid carrier dolichol-pyrophosphate to an asparagine residue within an Asn-X-Ser/Thr consensus motif in nascent polypeptide chains, the first step in protein N-glycosylation. N-glycosylation occurs cotranslationally and the complex associates with the Sec61 complex at the channel-forming translocon complex that mediates protein translocation across the endoplasmic reticulum (ER). All subunits are required for a maximal enzyme activity. The sequence is that of Dolichyl-diphosphooligosaccharide--protein glycosyltransferase subunit TMEM258 from Caenorhabditis briggsae.